Reading from the N-terminus, the 147-residue chain is Hemoglobin subunit gamma (147 aa).

The 145-residue stretch at 3 to 147 (NFTAEDKAAI…VASALASRYH (145 aa)) folds into the Globin domain. Positions 64 and 93 each coordinate heme b.

Belongs to the globin family. Heterotetramer of two alpha chains and two gamma chains in fetal hemoglobin (Hb F). In terms of tissue distribution, red blood cells.

In terms of biological role, gamma chains make up the fetal hemoglobin F, in combination with alpha chains. The sequence is that of Hemoglobin subunit gamma (HBG) from Alouatta belzebul (Red-handed howler monkey).